Here is a 358-residue protein sequence, read N- to C-terminus: Gap junction alpha-5 protein (358 aa).

Topologically, residues 1–19 are cytoplasmic; the sequence is MGDWSFLGEFLEEVHKHST. A helical transmembrane segment spans residues 20 to 40; that stretch reads VIGKVWLTVLFIFRMLVLGTA. Residues 41 to 76 lie on the Extracellular side of the membrane; it reads AESSWGDEQADFQCDTMQPGCGNVCYDQAFPISHIR. A helical membrane pass occupies residues 77–97; it reads YWVLQIIFVSTPSLVYMGHAM. Over 98–164 the chain is Cytoplasmic; the sequence is HTVRMQEKRK…CSILIRTTME (67 aa). A helical transmembrane segment spans residues 165-185; the sequence is VAFIVGQYLLYGIFLDTLHVC. The Extracellular segment spans residues 186–205; it reads RRSPCPHPVNCYVSRPTEKN. The helical transmembrane segment at 206–226 threads the bilayer; that stretch reads VFIVFMLAVAALSLFLSLAEL. Topologically, residues 227–358 are cytoplasmic; the sequence is YHLGWKKLRQ…SKARSDDLSV (132 aa). Residues 318–358 form a disordered region; sequence AQKPEVPNGASPGHRLPHGYQSDKRRLSKASSKARSDDLSV. Ser-353 and Ser-357 each carry phosphoserine.

The protein belongs to the connexin family. Alpha-type (group II) subfamily. A connexon is composed of a hexamer of connexins.

It is found in the cell membrane. Its subcellular location is the cell junction. The protein resides in the gap junction. Functionally, one gap junction consists of a cluster of closely packed pairs of transmembrane channels, the connexons, through which materials of low MW diffuse from one cell to a neighboring cell. The protein is Gap junction alpha-5 protein (GJA5) of Canis lupus familiaris (Dog).